Reading from the N-terminus, the 436-residue chain is 3-ketoacyl-CoA thiolase (436 aa).

Residue Cys99 is the Acyl-thioester intermediate of the active site. Residues His392 and Cys422 each act as proton acceptor in the active site.

It belongs to the thiolase-like superfamily. Thiolase family. Heterotetramer of two alpha chains (FadJ) and two beta chains (FadI).

The protein localises to the cytoplasm. It carries out the reaction an acyl-CoA + acetyl-CoA = a 3-oxoacyl-CoA + CoA. The protein operates within lipid metabolism; fatty acid beta-oxidation. Functionally, catalyzes the final step of fatty acid oxidation in which acetyl-CoA is released and the CoA ester of a fatty acid two carbons shorter is formed. The polypeptide is 3-ketoacyl-CoA thiolase (Salmonella paratyphi A (strain ATCC 9150 / SARB42)).